A 508-amino-acid chain; its full sequence is Photosystem II CP47 reaction center protein (508 aa).

6 helical membrane passes run 21–36 (AVHLMHTALVSGWAGS), 101–115 (ILLSGALFMAAIWHW), 140–156 (GIHLFLSGLLCFGFGAF), 203–218 (IAAGILGILAGLFHLS), 237–252 (VLSSSIAAVFWAAFVV), and 457–472 (WFALLFFFGHIWHGAR).

It belongs to the PsbB/PsbC family. PsbB subfamily. PSII is composed of 1 copy each of membrane proteins PsbA, PsbB, PsbC, PsbD, PsbE, PsbF, PsbH, PsbI, PsbJ, PsbK, PsbL, PsbM, PsbT, PsbX, PsbY, PsbZ, Psb30/Ycf12, at least 3 peripheral proteins of the oxygen-evolving complex and a large number of cofactors. It forms dimeric complexes. Binds multiple chlorophylls. PSII binds additional chlorophylls, carotenoids and specific lipids. serves as cofactor.

Its subcellular location is the plastid. The protein resides in the chloroplast thylakoid membrane. Functionally, one of the components of the core complex of photosystem II (PSII). It binds chlorophyll and helps catalyze the primary light-induced photochemical processes of PSII. PSII is a light-driven water:plastoquinone oxidoreductase, using light energy to abstract electrons from H(2)O, generating O(2) and a proton gradient subsequently used for ATP formation. This chain is Photosystem II CP47 reaction center protein, found in Nephroselmis olivacea (Green alga).